The primary structure comprises 3148 residues: MATMEKLMKAFESLKSFQQQQGPPTAEEIVQRQKKEQATTKKDRVSHCLTICENIVAQSLRTSPEFQKLLGIAMEMFLLCSDDSESDVRMVADECLNRIIKALMDSNLPRLQLELYKEIKKNGASRSLRAALWRFAELAHLIRPQKCRPYLVNLLPCLTRITKRQEETIQETLAAAMPKIMAALGHFANDGEIKMLLKSFVANLKSSSPTIRRTAASSAVSVCQHSRRTSYFYTWLLNVLLGLLVPVDEEHHSHLILGVLLTLRYLMPLLQQQVNTISLKGSFGVMQKEADVQPAPEQLLQVYELTLHYTQHWDHNVVTAALELLQQTLRTPPPELLHVLITAGSIQHASVFRQDIESRARSGSILELIAGGGSTCSPLLHRKHRGKMLSGEEDALEDDPEKTDVTTGYFTAVGADNSSAAQVDIITQQPRSSQHTIQPGDSVDLSASSEQGGRGGGASASDTPESPNDEEDMLSRSSSCGANITPETVEDATPENPAQEGRPVGGSGAYDHSLPPSDSSQTTTEGPDSAVTPSDVAELVLDGSESQYSGMQIGTLQDEEDEGTATSSQEDPPDPFLRSALALSKPHLFESRGHNRQGSDSSVDRFIPKDEPPEPEPDNKMSRIKGAIGHYTDRGAEPVVHCVRLLSASFLLTGQKNGLTPDRDVRVSVKALAVSCVGAAAALHPEAFFNSLYLEPLDGLRAEEQQYISDVLGFIDHGDPQIRGATAILCAAIIQAALSKMRYNIHSWLASVQSKTGNPLSLVDLVPLLQKALKDESSVTCKMACSAVRHCIMSLCGSTLSELGLRLVVDLFALKDSSYWLVRTELLETLAEMDFRLVNFLERKSEALHKGEHHYTGRLRLQERVLNDVVIQLLGDDDPRVRHVAASAVSRLVSRLFFDCDQGQADPVVAIARDQSSVYLQLLMHETQPPSQLTVSTITRTYRGFNLSNNVADVTVENNLSRVVTAVSHAFTSSTSRALTFGCCEALCLLAVHFPICTWTTGWHCGHISSQSSFSSRVGRSRGRTLSVSQSGSTPASSTTSSAVDPERRTLTVGTANMVLSLLSSAWFPLDLSAHQDALLLCGNLLAAVAPKCLRNPWAGEDDSSSSSTNTSGGTHKMEEPWAALSDRAFVAMVEQLFSHLLKVLNICAHVLDDTPPGPPVKATLPSLTNTPSLSPIRRKGKDKDAVDSSSAPLSPKKGNEANTGRPTESTGSTAVHKSTTLGSFYHLPPYLKLYDVLKATHANFKVMLDLHSNQEKFGSFLRAALDVLSQLLELATLNDINKCVEEILGYLKSCFSREPTMATVCVQQLLKTLFGTNLASQYEGFLSGPSRSQGKALRLGSSSLRPGLYHYCFMAPYTHFTQALADASLRNMVQAEHEQDTSGWFDVMQKTSNQLRSNIANAARHRGDKNAIHNHIRLFEPLVIKALKQYTTSTSVALQRQVLDLLAQLVQLRVNYCLLDSDQVFIGFVLKQFEYIEVGQFRDSEAIIPNIFFFLVLLSYERYHSKQIISIPKIIQLCDGIMASGRKAVTHAIPALQPIVHDLFVLRGSNKADAGKELETQKEVVVSMLLRLVQYHQVLEMFILVLQQCHKENEDKWKRLSRQIADVILPMIAKQQMHLDSPEALGVLNTLFETVAPSSLRPVDMLLKSMFTTPVTMASVATVQLWVSGILAVLRVLVSQSTEDIVLSRIHELSLSPHLLSCHTIKRLQQPNLSPSDQPAGDGQQNQEPNGEAQKSLPEETFARFLIQLVGVLLDDISSRHVKVDITEQQHTFYCQQLGTLLMCLIHVFKSGMFRRITVAASRLLKGESGSGHSGIEFYPLEGLNSMVHCLITTHPSLVLLWCQVLLIIDYTNYSWWTEVHQTPKGHSLSCTKLLSPHSSGEGEEKPETRLAMINREIVRRGALILFCDYVCQNLHDSEHLTWLIVNHVRDLIDLSHEPPVQDFISAVHRNSAASGLFIQAIQSRCDNLNSPTMLKKTLQCLEGIHLSQSGSLLMLYVDKLLSTPFRVLARMVDTLACRRVEMLLAETLQNSVAQLPLEELHRIQEYLQTSGLAQRHQRFYSLLDRFRATVSDTSSPSTPVTSHPLDGDPPPAPELVIADKEWYVALVKSQCCLHGDVSLLETTELLTKLPPADLLSVMSCKEFNLSLLCPCLSLGVQRLLRGQGSLLLETALQVTLEQLAGATGLLPVPHHSFIPTSHPQSHWKQLAEVYGDPGFYSRVLSLCRALSQYLLTVKQLPSSLRIPSDKEHLITTFTCAATEVVVWHLLQDQLPLSVDLQWALSCLCLALQQPCVWNKLSTPEYNTHTCSLIYCLHHIILAVAVSPGDQLLHPERKKTKALRHSDDEDQVDSVHDNHTLEWQACEIMAELVEGLQSVLSLGHHRNTAFPAFLTPTLRNIIISLSRLPLVNSHTRVPPLVWKLGWSPQPGGEFGTTLPEIPVDFLQEKDVFREFLYRINTLGWSNRTQFEETWATLLGVLVTQPITMDQEEETQQEEDLERTQLNVLAVQAITSLVLSAMTLPTAGNPAVSCLEQQPRNKSLKALETRFGRKLAVIRGEVEREIQALVSKRDNVHTYHPYHAWDPVPSLSAASPGTLISHEKLLLQINTERELGNMDYKLGQVSIHSVWLGNNITPLREEEWGEDEDDEADPPAPTSPPLSPINSRKHRAGVDIHSCSQFLLELYSQWVIPGSPSNRKTPTILISEVVRSLLAVSDLFTERNQFDMMFSTLMELQKLHPPEDEILNQYLVPAICKAAAVLGMDKAIAEPVCRLLETTLRSTHLPSRMGALHGVLYVLECDLLDDTAKQLIPTVSEYLLSNLRAIAHCVNLHNQQHVLVMCAVAFYMMENYPLDVGTEFMAGIIQLCGVMVSASEDSTPSIIYHCVLRGLERLLLSEQLSRVDGEALVKLSVDRVNMPSPHRAMAALGLMLTCMYTGKEKASPAARSAHSDPQVPDSESIIVAMERVSVLFDRIRKGLPSEARVVARILPQFLDDFFPPQDIMNKVIGEFLSNQQPYPQFMATVVYKVFQTLHATGQSSMVRDWVLLSLSNFTQRTPVAMAMWSLSCFFVSASTSQWISALLPHVISRMGSSDVVDVNLFCLVAMDFYRHQIDEELDRRAFQSVFETVASPGSPYFQLLACLQSIHQDKSL.

HEAT repeat units follow at residues 149–186 and 191–228; these read PYLV…ALGH and GEIK…HSRR. 3 stretches are compositionally biased toward polar residues: residues 428 to 451, 475 to 486, and 516 to 526; these read QQPR…SSEQ, SRSSSCGANITP, and PSDSSQTTTEG. 2 disordered regions span residues 428–532 and 557–622; these read QQPR…SAVT and QDEE…NKMS. A compositionally biased stretch (basic and acidic residues) spans 602-621; that stretch reads SVDRFIPKDEPPEPEPDNKM. HEAT repeat units lie at residues 760 to 797 and 861 to 898; these read LSLV…SLCG and LQER…RLFF. Composition is skewed to low complexity over residues 1025 to 1042 and 1105 to 1115; these read TLSV…TTSS and SSSSTNTSGGT. Disordered stretches follow at residues 1025 to 1047, 1098 to 1117, and 1158 to 1215; these read TLSV…VDPE, WAGE…GTHK, and GPPV…GSTA. The span at 1201–1215 shows a compositional bias: polar residues; the sequence is EANTGRPTESTGSTA. One copy of the HEAT 5 repeat lies at 1419–1456; it reads LFEPLVIKALKQYTTSTSVALQRQVLDLLAQLVQLRVN. A compositionally biased stretch (polar residues) spans 1712 to 1730; sequence PNLSPSDQPAGDGQQNQEP. Disordered stretches follow at residues 1712 to 1735 and 2072 to 2091; these read PNLS…GEAQ and VSDT…DGDP. The segment covering 2072 to 2084 has biased composition (low complexity); that stretch reads VSDTSSPSTPVTS. Positions 2398 to 2407 match the Nuclear export signal motif; the sequence is IIISLSRLPL. Acidic residues predominate over residues 2639 to 2649; sequence EWGEDEDDEAD. The segment at 2639-2664 is disordered; sequence EWGEDEDDEADPPAPTSPPLSPINSR. Pro residues predominate over residues 2650 to 2659; the sequence is PPAPTSPPLS.

Belongs to the huntingtin family.

The protein resides in the cytoplasm. Its subcellular location is the nucleus. Its function is as follows. May play a role in microtubule-mediated transport or vesicle function. The sequence is that of Huntingtin (htt) from Takifugu rubripes (Japanese pufferfish).